A 445-amino-acid polypeptide reads, in one-letter code: Glucose-6-phosphate isomerase (445 aa).

Glu284 serves as the catalytic Proton donor. Residues His305 and Lys419 contribute to the active site.

The protein belongs to the GPI family.

Its subcellular location is the cytoplasm. It carries out the reaction alpha-D-glucose 6-phosphate = beta-D-fructose 6-phosphate. Its pathway is carbohydrate biosynthesis; gluconeogenesis. It participates in carbohydrate degradation; glycolysis; D-glyceraldehyde 3-phosphate and glycerone phosphate from D-glucose: step 2/4. Functionally, catalyzes the reversible isomerization of glucose-6-phosphate to fructose-6-phosphate. The chain is Glucose-6-phosphate isomerase from Leptospira borgpetersenii serovar Hardjo-bovis (strain JB197).